Here is a 156-residue protein sequence, read N- to C-terminus: Snaclec rhinocetin subunit alpha (156 aa).

The signal sequence occupies residues 1–23; sequence MGRFIFLSSGWLVVFLSLSGTGA. 3 disulfides stabilise this stretch: Cys-27-Cys-38, Cys-55-Cys-150, and Cys-125-Cys-142. The C-type lectin domain maps to 34-151; sequence YEGHCYKFFF…CGDNYPFVCM (118 aa).

Belongs to the snaclec family. Heterodimer; disulfide-linked. As to expression, expressed by the venom gland.

The protein resides in the secreted. In terms of biological role, antagonist of the alpha-2 subunit of the integrin alpha-2/beta-1 (ITGA2/ITGB1) on human platelets and endothelial cells. This protein inhibits collagen-stimulated activation of human platelets in a dose-dependent manner. In addition, it antagonizes the binding of monoclonal antibodies against the alpha-2 subunit of integrin alpha-2/beta-1 to platelets and it coimmunoprecipitates with this integrin. This chain is Snaclec rhinocetin subunit alpha, found in Bitis rhinoceros (West African gaboon viper).